The primary structure comprises 390 residues: Isoaspartyl dipeptidase (390 aa).

Zn(2+)-binding residues include H68 and H70. Residues 75–77 (GGE), T106, and Y137 each bind substrate. A Zn(2+)-binding site is contributed by K162. K162 is subject to N6-carboxylysine. R169 serves as a coordination point for substrate. Positions 201 and 230 each coordinate Zn(2+). Residue R233 participates in substrate binding. D285 contributes to the Zn(2+) binding site. The Proton acceptor role is filled by D285. A substrate-binding site is contributed by S289.

It belongs to the peptidase M38 family. Zn(2+) serves as cofactor. Requires Co(2+) as cofactor. Carboxylation allows a single lysine to coordinate two zinc ions.

The protein localises to the cytoplasm. P-hydroxymercuribenzoate causes a slight inhibition (8 to 17 %). Iodoacetamide, o-iodosobenzoate and ammonium persulfate do not inhibit the enzyme activity. Its function is as follows. Catalyzes the hydrolytic cleavage of a subset of L-isoaspartyl (L-beta-aspartyl) dipeptides. Used to degrade proteins damaged by L-isoaspartyl residues formation. The best substrate for the enzyme reported thus far is iso-Asp-Leu. The polypeptide is Isoaspartyl dipeptidase (iadA) (Escherichia coli (strain K12)).